A 589-amino-acid chain; its full sequence is Mitoguardin 2 (589 aa).

Helical transmembrane passes span 11–31 (IIQA…TTFG) and 42–62 (PGLR…ALAA). The disordered stretch occupies residues 87-134 (VPGSVLPVRRSSSAKKGYSRSRVQSPSSKSNDTLSGISSLDPSKHSSS). Low complexity-rich tracts occupy residues 106 to 116 (RSRVQSPSSKS) and 123 to 134 (ISSLDPSKHSSS).

Belongs to the mitoguardin family. In terms of assembly, homodimer and heterodimer; forms heterodimers with miga1.

Its subcellular location is the mitochondrion outer membrane. Regulator of mitochondrial fusion: acts by forming homo- and heterodimers at the mitochondrial outer membrane and facilitating the formation of pld6/MitoPLD dimers. May act by regulating phospholipid metabolism via pld6/MitoPLD. This is Mitoguardin 2 from Xenopus laevis (African clawed frog).